A 139-amino-acid chain; its full sequence is Lamprin 0.9 (139 aa).

A signal peptide spans 1–19; sequence MAAAIQALLVLALLHLATA. 8 consecutive repeat copies span residues 42-46, 47-51, 52-56, 57-61, 62-66, 67-71, 92-96, and 106-110. The tract at residues 42 to 110 is 8 X 5 AA approximate repeats; it reads GGLGYGGLGY…YHHALGGLGY (69 aa).

As to quaternary structure, the polymeric lamprin chains self-aggregate to form fibers and have secondary structures particularly rich in beta-sheets and in beta-turns.

It is found in the secreted. Its subcellular location is the extracellular space. The protein resides in the extracellular matrix. Functionally, self-aggregating protein that is part of the soluble form of lamprin. This is Lamprin 0.9 from Petromyzon marinus (Sea lamprey).